The chain runs to 1067 residues: Zinc finger MIZ domain-containing protein 1 (1067 aa).

Residues 1-120 (MNSMDRHIQQ…HQKSRQSDPP (120 aa)) form a sufficient for transactivation activity; sufficient for interaction with NOTCH1 region. K91 participates in a covalent cross-link: Glycyl lysine isopeptide (Lys-Gly) (interchain with G-Cter in SUMO2). Disordered regions lie at residues 112-141 (QKSR…TLSH) and 327-542 (NSQF…PFPP). The segment covering 128-141 (PLSSMSSMKPTLSH) has biased composition (low complexity). A compositionally biased stretch (polar residues) spans 413-429 (YGNQQYGPNSQFPTQPG). A compositionally biased stretch (pro residues) spans 431 to 440 (YPAPNPPRPL). Positions 479–497 (NNTFSGSSYSNYSQGNVNR) are enriched in low complexity. The segment covering 510–521 (SPVPGNPTPPMT) has biased composition (pro residues). The SP-RING-type zinc finger occupies 727 to 808 (GEDGVEQTAI…MWGILNAIQH (82 aa)). Residues C758, H760, C781, and C784 each contribute to the Zn(2+) site. Glycyl lysine isopeptide (Lys-Gly) (interchain with G-Cter in SUMO2) cross-links involve residues K834 and K843. Residues 837-1067 (PDGIPSKRFK…DDLLSLFENN (231 aa)) form a transactivation domain region. Pro residues predominate over residues 868-879 (GPSPYPLPPPPG). The interval 868 to 1067 (GPSPYPLPPP…DDLLSLFENN (200 aa)) is disordered. Composition is skewed to polar residues over residues 881-895 (TNSN…NYQG) and 951-961 (SSDQPHPSIQQ). Pro residues predominate over residues 981–996 (APPPPPSQPPRQPPQA). The span at 1040–1067 (PDELLSYLDPPDLPSNSNDDLLSLFENN) shows a compositional bias: low complexity.

As to quaternary structure, interacts with AR, but not with ESR1, NR3C1, PGR, THRB nor VDR. Interacts with NOTCH1 and RBPJ. Interacts with SMARCA4. Interacts (via SP-RING-type domain) with SMAD3 and SMAD4 (via MH2 domain). In terms of tissue distribution, expressed most abundantly in ovary and, at lower levels, in prostate, spleen and testis. Weak expression, if any, in thymus, small intestine, colon and peripheral blood leukocytes.

It localises to the nucleus. Its subcellular location is the nucleoplasm. The protein resides in the cytoplasm. Acts as a transcriptional coactivator. Increases ligand-dependent transcriptional activity of AR and promotes AR sumoylation. The stimulation of AR activity is dependent upon sumoylation. Also functions as a transcriptional coactivator in the TGF-beta signaling pathway by increasing the activity of the SMAD3/SMAD4 transcriptional complex. Involved in transcriptional activation of a subset of NOTCH1 target genes including MYC. Involved in thymocyte and T cell development. Involved in the regulation of postmitotic positioning of pyramidal neurons in the developing cerebral cortex. In Homo sapiens (Human), this protein is Zinc finger MIZ domain-containing protein 1.